Here is a 213-residue protein sequence, read N- to C-terminus: T-cell surface glycoprotein CD8 beta chain (213 aa).

Positions 1 to 21 (MQPWLWLVFSMKLAALWSSSA) are cleaved as a signal peptide. The Ig-like V-type domain occupies 22–133 (LIQTPSSLLV…KMVFGTGTKL (112 aa)). Residues 22–175 (LIQTPSSLLV…QKGLTCSLTT (154 aa)) lie on the Extracellular side of the membrane. Asparagine 34 carries an N-linked (GlcNAc...) asparagine glycan. Cysteine 41 and cysteine 117 form a disulfide bridge. The chain crosses the membrane as a helical span at residues 176–196 (LSLLVVCILLLLAFLGVAVYF). Topologically, residues 197–213 (YCVRRRARIHFMKQFHK) are cytoplasmic.

In terms of assembly, forms disulfide-linked heterodimers with CD8A at the cell surface. Interacts with CD3D; this interaction couples TCR-CD3 with CD8. Interacts with LCK. Post-translationally, palmitoylated at the cytoplasmic tail and thereby targets the heterodimer CD8A/CD8B to lipid rafts unlike CD8A homodimers.

It is found in the membrane. Integral membrane glycoprotein that plays an essential role in the immune response and serves multiple functions in responses against both external and internal offenses. In T-cells, functions primarily as a coreceptor for MHC class I molecule:peptide complex. The antigens presented by class I peptides are derived from cytosolic proteins while class II derived from extracellular proteins. Interacts simultaneously with the T-cell receptor (TCR) and the MHC class I proteins presented by antigen presenting cells (APCs). In turn, recruits the Src kinase LCK to the vicinity of the TCR-CD3 complex. A palmitoylation site in the cytoplasmic tail of CD8B chain contributes to partitioning of CD8 into the plasma membrane lipid rafts where signaling proteins are enriched. Once LCK recruited, it initiates different intracellular signaling pathways by phosphorylating various substrates ultimately leading to lymphokine production, motility, adhesion and activation of cytotoxic T-lymphocytes (CTLs). Additionally, plays a critical role in thymic selection of CD8+ T-cells. This Mus musculus (Mouse) protein is T-cell surface glycoprotein CD8 beta chain (Cd8b).